The chain runs to 147 residues: Hemoglobin subunit beta (147 aa).

A Globin domain is found at 3-147; sequence EWTDDERAII…VVSALGRQYH (145 aa). Positions 64 and 93 each coordinate heme b.

Belongs to the globin family. Heterotetramer of two alpha chains and two beta chains. As to expression, red blood cells.

In terms of biological role, involved in oxygen transport from gills to the various peripheral tissues. The chain is Hemoglobin subunit beta (hbb) from Merlangius merlangus (Whiting).